We begin with the raw amino-acid sequence, 125 residues long: Ribosome-binding factor A (125 aa).

This sequence belongs to the RbfA family. Monomer. Binds 30S ribosomal subunits, but not 50S ribosomal subunits or 70S ribosomes.

The protein localises to the cytoplasm. One of several proteins that assist in the late maturation steps of the functional core of the 30S ribosomal subunit. Associates with free 30S ribosomal subunits (but not with 30S subunits that are part of 70S ribosomes or polysomes). Required for efficient processing of 16S rRNA. May interact with the 5'-terminal helix region of 16S rRNA. This is Ribosome-binding factor A from Xylella fastidiosa (strain 9a5c).